We begin with the raw amino-acid sequence, 417 residues long: Serine hydroxymethyltransferase (417 aa).

(6S)-5,6,7,8-tetrahydrofolate is bound by residues Leu121 and 125–127 (GHL). Position 229 is an N6-(pyridoxal phosphate)lysine (Lys229). 355–357 (SPF) serves as a coordination point for (6S)-5,6,7,8-tetrahydrofolate.

Belongs to the SHMT family. In terms of assembly, homodimer. Requires pyridoxal 5'-phosphate as cofactor.

The protein resides in the cytoplasm. The enzyme catalyses (6R)-5,10-methylene-5,6,7,8-tetrahydrofolate + glycine + H2O = (6S)-5,6,7,8-tetrahydrofolate + L-serine. Its pathway is one-carbon metabolism; tetrahydrofolate interconversion. It participates in amino-acid biosynthesis; glycine biosynthesis; glycine from L-serine: step 1/1. Catalyzes the reversible interconversion of serine and glycine with tetrahydrofolate (THF) serving as the one-carbon carrier. This reaction serves as the major source of one-carbon groups required for the biosynthesis of purines, thymidylate, methionine, and other important biomolecules. Also exhibits THF-independent aldolase activity toward beta-hydroxyamino acids, producing glycine and aldehydes, via a retro-aldol mechanism. The chain is Serine hydroxymethyltransferase from Buchnera aphidicola subsp. Acyrthosiphon pisum (strain APS) (Acyrthosiphon pisum symbiotic bacterium).